A 42-amino-acid chain; its full sequence is Photosystem I reaction center subunit IX (42 aa).

Residues 7–27 (FLSTAPVLIMALLTVTAGILI) form a helical membrane-spanning segment.

It belongs to the PsaJ family.

Its subcellular location is the cellular thylakoid membrane. Its function is as follows. May help in the organization of the PsaE and PsaF subunits. This Crocosphaera subtropica (strain ATCC 51142 / BH68) (Cyanothece sp. (strain ATCC 51142)) protein is Photosystem I reaction center subunit IX.